The following is a 150-amino-acid chain: Large ribosomal subunit protein bL9 (150 aa).

The protein belongs to the bacterial ribosomal protein bL9 family.

Functionally, binds to the 23S rRNA. In Pectobacterium atrosepticum (strain SCRI 1043 / ATCC BAA-672) (Erwinia carotovora subsp. atroseptica), this protein is Large ribosomal subunit protein bL9.